The following is a 372-amino-acid chain: tRNA-specific 2-thiouridylase MnmA (372 aa).

ATP is bound by residues 6–13 (AMSGGVDS) and Leu-32. The Nucleophile role is filled by Cys-101. Cys-101 and Cys-193 are joined by a disulfide. Position 125 (Gly-125) interacts with ATP. Residues 143–145 (KDQ) form an interaction with tRNA region. Catalysis depends on Cys-193, which acts as the Cysteine persulfide intermediate.

This sequence belongs to the MnmA/TRMU family.

It is found in the cytoplasm. It carries out the reaction S-sulfanyl-L-cysteinyl-[protein] + uridine(34) in tRNA + AH2 + ATP = 2-thiouridine(34) in tRNA + L-cysteinyl-[protein] + A + AMP + diphosphate + H(+). In terms of biological role, catalyzes the 2-thiolation of uridine at the wobble position (U34) of tRNA, leading to the formation of s(2)U34. In Corynebacterium kroppenstedtii (strain DSM 44385 / JCM 11950 / CIP 105744 / CCUG 35717), this protein is tRNA-specific 2-thiouridylase MnmA.